The primary structure comprises 193 residues: MSTPTAYEHDADGSKFIPATQRPDGTWRKPRRIKEGYVPQEEVPLYESKGKQFRARQNDGLPVGLTPEIVAQAQKKKGQRSTIQPIPGMIITVEKKKKKKKTVTGVEEAAEKLAKCEIQEPTLPSQSVPTESISQSDPTKRLKNLRKKLREIEFLEEKIKAGLLKSPDKDQKEKMSKKNEILNEIDILKNSIL.

Disordered stretches follow at residues 1 to 27 and 118 to 142; these read MSTPTAYEHDADGSKFIPATQRPDGTW and IQEPTLPSQSVPTESISQSDPTKRL. Positions 122–137 are enriched in polar residues; the sequence is TLPSQSVPTESISQSD. A coiled-coil region spans residues 139–192; that stretch reads TKRLKNLRKKLREIEFLEEKIKAGLLKSPDKDQKEKMSKKNEILNEIDILKNSI.

This sequence belongs to the pym family. As to quaternary structure, interacts (via N-terminus) with mago and tsu/Y14; the interaction is direct.

Its subcellular location is the cytoplasm. It is found in the nucleus. In terms of biological role, regulator of the exon junction complex (EJC), a multiprotein complex that associates immediately upstream of the exon-exon junction on mRNAs and serves as a positional landmarks for the intron exon structure of genes and directs post-transcriptional processes in the cytoplasm such as mRNA export, nonsense-mediated mRNA decay (NMD) or translation. This Bombyx mori (Silk moth) protein is Partner of Y14 and mago.